A 725-amino-acid polypeptide reads, in one-letter code: Prolyl 3-hydroxylase 1 (725 aa).

Residues 1–14 form the signal peptide; that stretch reads MALLLPLLPLLVWA. A TPR 1 repeat occupies 36–69; the sequence is PDALFAAGAEAYARGDWPAVVLQMERALRARAAI. An N-linked (GlcNAc...) asparagine glycan is attached at Asn82. 3 TPR repeats span residues 136–169, 198–231, and 294–327; these read RSPY…NPEH, HMTE…YFVA, and PSHF…FPND. Residues 394 to 441 adopt a coiled-coil conformation; it reads KRLREKQKVERETAARISEEIGNLMKEIETLVEEKAKESAEMSKFIRE. 2 N-linked (GlcNAc...) asparagine glycosylation sites follow: Asn460 and Asn533. The region spanning 557–671 is the Fe2OG dioxygenase domain; the sequence is SHLVCRTAID…RCAIALWFTL (115 aa). Residues His580, Asp582, and His652 each coordinate Fe cation. The active site involves Arg662. A compositionally biased stretch (polar residues) spans 701 to 715; it reads ETSAEQEPTAATSTA. The interval 701–725 is disordered; that stretch reads ETSAEQEPTAATSTAGLHAAGKDEL. Residues 722–725 carry the Prevents secretion from ER motif; it reads KDEL.

Belongs to the leprecan family. Binds unfolded collagen in a complex with CYPB and CRTAP. Fe cation is required as a cofactor. It depends on L-ascorbate as a cofactor. Expressed in embryonic dermis, tendon, cartilage, liver and kidney. Expression in the kidney is restricted to the calyx. In the liver, expression is restricted to the interlobular septum.

It is found in the endoplasmic reticulum. The catalysed reaction is L-prolyl-[collagen] + 2-oxoglutarate + O2 = trans-3-hydroxy-L-prolyl-[collagen] + succinate + CO2. Its function is as follows. Has prolyl 3-hydroxylase activity catalyzing the post-translational formation of 3-hydroxyproline in -Xaa-Pro-Gly-sequences in collagens, especially types IV and V. May be involved in the secretoty pathway of cells. Has growth suppressive activity in fibroblasts. The sequence is that of Prolyl 3-hydroxylase 1 from Gallus gallus (Chicken).